The chain runs to 540 residues: Exopolysaccharide phosphotransferase SCO6022 (540 aa).

The protein belongs to the stealth family.

This chain is Exopolysaccharide phosphotransferase SCO6022, found in Streptomyces coelicolor (strain ATCC BAA-471 / A3(2) / M145).